A 150-amino-acid chain; its full sequence is Endoribonuclease YbeY (150 aa).

His102, His106, and His112 together coordinate Zn(2+).

This sequence belongs to the endoribonuclease YbeY family. It depends on Zn(2+) as a cofactor.

It localises to the cytoplasm. Functionally, single strand-specific metallo-endoribonuclease involved in late-stage 70S ribosome quality control and in maturation of the 3' terminus of the 16S rRNA. In Thermotoga sp. (strain RQ2), this protein is Endoribonuclease YbeY.